We begin with the raw amino-acid sequence, 379 residues long: Carbamoyl phosphate synthase small chain (379 aa).

Residues 1-187 (MNFTPALLAL…GSGHAPAPAS (187 aa)) are CPSase. S48, G239, and G241 together coordinate L-glutamine. The region spanning 191–378 (KVVAYDFGVK…IELMKPQGVR (188 aa)) is the Glutamine amidotransferase type-1 domain. C267 (nucleophile) is an active-site residue. L268, Q271, N309, G311, and F312 together coordinate L-glutamine. Active-site residues include H351 and E353.

This sequence belongs to the CarA family. As to quaternary structure, composed of two chains; the small (or glutamine) chain promotes the hydrolysis of glutamine to ammonia, which is used by the large (or ammonia) chain to synthesize carbamoyl phosphate. Tetramer of heterodimers (alpha,beta)4.

The catalysed reaction is hydrogencarbonate + L-glutamine + 2 ATP + H2O = carbamoyl phosphate + L-glutamate + 2 ADP + phosphate + 2 H(+). It catalyses the reaction L-glutamine + H2O = L-glutamate + NH4(+). The protein operates within amino-acid biosynthesis; L-arginine biosynthesis; carbamoyl phosphate from bicarbonate: step 1/1. It participates in pyrimidine metabolism; UMP biosynthesis via de novo pathway; (S)-dihydroorotate from bicarbonate: step 1/3. Its function is as follows. Small subunit of the glutamine-dependent carbamoyl phosphate synthetase (CPSase). CPSase catalyzes the formation of carbamoyl phosphate from the ammonia moiety of glutamine, carbonate, and phosphate donated by ATP, constituting the first step of 2 biosynthetic pathways, one leading to arginine and/or urea and the other to pyrimidine nucleotides. The small subunit (glutamine amidotransferase) binds and cleaves glutamine to supply the large subunit with the substrate ammonia. In Thioalkalivibrio sulfidiphilus (strain HL-EbGR7), this protein is Carbamoyl phosphate synthase small chain.